A 105-amino-acid chain; its full sequence is Cytochrome c-553-like (105 aa).

An N-terminal signal peptide occupies residues 1–29 (MAGIVSLVILAVALFSFMNFDPYVSQVLA). The heme c site is built by Cys45, Cys48, His49, and Met85.

Post-translationally, binds 1 heme c group covalently per subunit.

This chain is Cytochrome c-553-like (cytM), found in Synechocystis sp. (strain ATCC 27184 / PCC 6803 / Kazusa).